We begin with the raw amino-acid sequence, 695 residues long: IQ domain-containing protein E (695 aa).

A disordered region spans residues 29 to 55; sequence KAKRKAFHKPPPTSPKSPYLSKPRKVA. Coiled-coil stretches lie at residues 157–264, 292–358, and 387–477; these read LHVQ…RLQT, SALL…SSKS, and NKDH…CPEV. Ser-322 carries the phosphoserine modification. Disordered regions lie at residues 357–390, 465–521, 564–599, and 618–695; these read KSHA…NKDH, EMKK…RRDA, ASKA…TGSP, and RARH…NFPV. The segment covering 465 to 482 has biased composition (basic and acidic residues); that stretch reads EMKKEEKEDCPEVPHKAQ. 2 IQ domains span residues 542–571 and 601–630; these read LDEA…HGSE and QEEA…RTTT.

Component of the EvC complex composed of EFCAB7, IQCE, EVC2 and EVC; built from two subcomplexes, EVC2:EVC and EFCAB7:IQCE. Interacts (via N-terminus) with EFCAB7 (via EF-hands 1 and 2); this interaction anchors the EVC-EVC2 complex in a signaling microdomain at the base of cilia and stimulates the Hedgehog (Hh) pathway. Interacts with EVC2 (via N-terminal end). Interacts with EVC.

The protein resides in the cell projection. It is found in the cilium membrane. Component of the EvC complex that positively regulates ciliary Hedgehog (Hh) signaling. Required for proper limb morphogenesis. This chain is IQ domain-containing protein E (IQCE), found in Homo sapiens (Human).